Consider the following 65-residue polypeptide: Large ribosomal subunit protein bL35 (65 aa).

The disordered stretch occupies residues 1 to 46 (MPKIKTNRGAAKRFKPTGSGGFKRAQSHRRHILTKKSTKRKRHLRS). A compositionally biased stretch (basic residues) spans 25-45 (AQSHRRHILTKKSTKRKRHLR).

Belongs to the bacterial ribosomal protein bL35 family.

In Thioalkalivibrio sulfidiphilus (strain HL-EbGR7), this protein is Large ribosomal subunit protein bL35.